Consider the following 398-residue polypeptide: Bone morphogenetic protein 2-A (398 aa).

The signal sequence occupies residues M1 to G23. Positions L24–R284 are excised as a propeptide. N-linked (GlcNAc...) asparagine glycosylation is found at N137, N202, and N340. 3 cysteine pairs are disulfide-bonded: C298–C363, C327–C395, and C331–C397.

It belongs to the TGF-beta family. Homodimer; disulfide-linked.

It localises to the secreted. Its function is as follows. Induces cartilage and bone formation. The polypeptide is Bone morphogenetic protein 2-A (bmp2-a) (Xenopus laevis (African clawed frog)).